A 298-amino-acid polypeptide reads, in one-letter code: ATP phosphoribosyltransferase (298 aa).

This sequence belongs to the ATP phosphoribosyltransferase family.

The protein localises to the cytoplasm. The catalysed reaction is 1-(5-phospho-beta-D-ribosyl)-ATP + diphosphate = 5-phospho-alpha-D-ribose 1-diphosphate + ATP. It functions in the pathway amino-acid biosynthesis; L-histidine biosynthesis; L-histidine from 5-phospho-alpha-D-ribose 1-diphosphate: step 1/9. Functionally, catalyzes the condensation of ATP and 5-phosphoribose 1-diphosphate to form N'-(5'-phosphoribosyl)-ATP (PR-ATP). Has a crucial role in the pathway because the rate of histidine biosynthesis seems to be controlled primarily by regulation of the enzymatic activity. This chain is ATP phosphoribosyltransferase (HIS1), found in Candida albicans (strain SC5314 / ATCC MYA-2876) (Yeast).